Consider the following 161-residue polypeptide: MSYDLETAERAAYAPFFGYMGAASAQIFTVLGAAYGTAKSAVGICSMGVMRPELIMKSVIPVIMAGIIGIYGLVVAMVLKGKVTSASAGYDLNKGFAHLAAGLTCGLCGLGAGYAIGIVGDAGVRGTAQQPRLFVGMILILIFSEVLGLYGMIVALILGTS.

Topologically, residues 1 to 15 are lumenal; that stretch reads MSYDLETAERAAYAP. A helical membrane pass occupies residues 16-36; sequence FFGYMGAASAQIFTVLGAAYG. At 37–58 the chain is on the cytoplasmic side; it reads TAKSAVGICSMGVMRPELIMKS. The chain crosses the membrane as a helical span at residues 59–79; the sequence is VIPVIMAGIIGIYGLVVAMVL. At 80-98 the chain is on the lumenal side; that stretch reads KGKVTSASAGYDLNKGFAH. Residues 99 to 119 form a helical membrane-spanning segment; that stretch reads LAAGLTCGLCGLGAGYAIGIV. Over 120 to 137 the chain is Cytoplasmic; that stretch reads GDAGVRGTAQQPRLFVGM. Residues 138 to 158 form a helical membrane-spanning segment; that stretch reads ILILIFSEVLGLYGMIVALIL. Over 159–161 the chain is Lumenal; the sequence is GTS.

Belongs to the V-ATPase proteolipid subunit family. In terms of assembly, V-ATPase is a heteromultimeric enzyme made up of two complexes: the ATP-hydrolytic V1 complex and the proton translocation V0 complex. The V1 complex consists of three catalytic AB heterodimers that form a heterohexamer, three peripheral stalks each consisting of EG heterodimers, one central rotor including subunits D and F, and the regulatory subunits C and H. The proton translocation complex V0 consists of the proton transport subunit a, a ring of proteolipid subunits c9c'', rotary subunit d, subunits e and f, and the accessory subunits vah-19/Ac45 and vah-20/PRR. Expressed in the H-shaped excretory cell, rectum, and a pair of cells posterior to the anus.

The protein resides in the membrane. Its function is as follows. Proton-conducting pore forming subunit of the V0 complex of vacuolar(H+)-ATPase (V-ATPase), a multisubunit enzyme composed of a peripheral complex (V1) that hydrolyzes ATP and a membrane integral complex (V0) that translocates protons. V-ATPase is responsible for acidifying and maintaining the pH of intracellular compartments and in some cell types, is targeted to the plasma membrane, where it is responsible for acidifying the extracellular environment. Involved in necrotic cell death. Required along with other vacuolar ATPase components for the removal of protein aggregates which form in immature oocytes in the distal gonad. This removal occurs as the oocytes mature and move to the proximal gonad, is triggered by the introduction of sperm through mating and occurs before fertilization. The introduction of sperm triggers V-ATPase accumulation in proximal oocytes and induces lysosomal acidification which leads to engulfing of protein aggregates by lysosomes and subsequent clearance of the aggregates. Lysosomal acidification also leads to changes in mitochondrial morphology and function. Mitochondria in distal immature oocytes are fragmented, produce high levels of reactive oxygen species (ROS) and have high membrane potential, indicative of metabolic inactivity. In contrast, mitochondria in proximal mature oocytes are tubular with lower ROS levels and membrane potential, indicative of an active metabolic state required for aggregate mobilization before clearance. This is V-type proton ATPase 16 kDa proteolipid subunit c 2 from Caenorhabditis elegans.